A 1113-amino-acid polypeptide reads, in one-letter code: Atrial natriuretic peptide-converting enzyme (1113 aa).

Over 1 to 112 (MGRVSFSVRV…QKLVTANLLR (112 aa)) the chain is Cytoplasmic. A helical; Signal-anchor for type II membrane protein membrane pass occupies residues 113–133 (FLLLVLIPCICALIVLLAILL). The Extracellular portion of the chain corresponds to 134–1113 (SFVGTLKRVY…QTFLQKKSQG (980 aa)). Residues N147, N202, and N208 are each glycosylated (N-linked (GlcNAc...) asparagine). Residues 176 to 202 (APSLPPSQSTPAWTPRAPSPEDQSHRN) are disordered. The region spanning 201-327 (RNTSTCMNIT…SSVRKSCFSL (127 aa)) is the FZ 1 domain. 8 disulfide bridges follow: C206–C266, C214–C259, C250–C290, C279–C324, C283–C307, C337–C350, C345–C363, and C357–C372. N298 and N317 each carry an N-linked (GlcNAc...) asparagine glycan. 4 consecutive LDL-receptor class A domains span residues 336–372 (LCGG…EAHC), 373–408 (NCSK…EQNC), 409–445 (DCNL…EVNC), and 446–483 (SCHS…ENCS). The N-linked (GlcNAc...) asparagine glycan is linked to N373. 9 disulfides stabilise this stretch: C374–C386, C381–C399, C393–C408, C410–C423, C418–C436, C430–C445, C447–C460, C455–C473, and C467–C482. N411 is a glycosylation site (N-linked (GlcNAc...) asparagine). N444 carries N-linked (GlcNAc...) asparagine glycosylation. Residues N481, N519, and N537 are each glycosylated (N-linked (GlcNAc...) asparagine). The region spanning 518 to 641 (SNCSQCEPIT…SSDNQTCLLP (124 aa)) is the FZ 2 domain. 14 disulfide bridges follow: C523/C586, C531/C579, C570/C608, C597/C638, C601/C625, C648/C660, C655/C673, C667/C682, C684/C698, C692/C711, C705/C720, C723/C735, C730/C748, and C742/C757. An N-linked (GlcNAc...) asparagine glycan is attached at N635. LDL-receptor class A domains lie at 647–682 (ECSP…EENC), 683–721 (GCKE…KNCS), and 722–757 (FCQD…EWGC). N719 carries N-linked (GlcNAc...) asparagine glycosylation. The region spanning 758-853 (VTLSKNGNSS…SRSEISLLCS (96 aa)) is the SRCR domain. 2 N-linked (GlcNAc...) asparagine glycosylation sites follow: N765 and N828. Intrachain disulfides connect C782-C884, C857-C979, C895-C911, C993-C1058, C1022-C1037, and C1048-C1077. Positions 869–1102 (ILGGRTSRPG…FVGWIERQIY (234 aa)) constitute a Peptidase S1 domain. Catalysis depends on charge relay system residues H910 and D959. Residue N970 is glycosylated (N-linked (GlcNAc...) asparagine). The Charge relay system role is filled by S1052. N1089 carries N-linked (GlcNAc...) asparagine glycosylation.

It belongs to the peptidase S1 family. Post-translationally, N-glycosylated; required for processing and activation. In terms of processing, activated through proteolytic processing by a trypsin-like protease; cleaved into a N-terminal propeptide and an activated corin protease fragment. Atrial natriuretic peptide-converting enzyme, 180 kDa soluble fragment is produced by cleavage by ADAM10. Cleavage by ADAM10 to produce soluble 180 kDa soluble fragment takes place after the transmembrane region and before FZ 1. A disulfide bond links the activated corin protease fragment and the N-terminal propeptide. The disulfide bond also links the activated corin protease fragment with Atrial natriuretic peptide-converting enzyme, 180 kDa soluble fragment. In terms of tissue distribution, highly expressed in heart. Also expressed in pregnant uterus.

It localises to the cell membrane. Its subcellular location is the secreted. Functionally, serine-type endopeptidase involved in atrial natriuretic peptide (NPPA) processing. Converts through proteolytic cleavage the non-functional propeptide NPPA into the active hormone, thereby regulating blood pressure in heart and promoting natriuresis, diuresis and vasodilation. Proteolytic cleavage of pro-NPPA also plays a role in female pregnancy by promoting trophoblast invasion and spiral artery remodeling in uterus. Also acts as a regulator of sodium reabsorption in kidney. May also process pro-NPPB the B-type natriuretic peptide. In Mus musculus (Mouse), this protein is Atrial natriuretic peptide-converting enzyme (Corin).